Reading from the N-terminus, the 403-residue chain is Na(+)-translocating NADH-quinone reductase subunit B (403 aa).

Transmembrane regions (helical) follow at residues 56–76, 121–141, 164–184, 225–245, 260–280, 287–307, 312–332, 348–368, and 371–391; these read MMII…YNVG, AYFL…EVLF, LPPS…VVLG, GFAG…NILG, GSMG…LLLT, IVAG…AIGS, MFAM…GMIF, WLFG…NPAF, and GMML…HFVV. An FMN phosphoryl threonine modification is found at T230.

The protein belongs to the NqrB/RnfD family. In terms of assembly, composed of six subunits; NqrA, NqrB, NqrC, NqrD, NqrE and NqrF. It depends on FMN as a cofactor.

The protein resides in the cell inner membrane. It catalyses the reaction a ubiquinone + n Na(+)(in) + NADH + H(+) = a ubiquinol + n Na(+)(out) + NAD(+). Its function is as follows. NQR complex catalyzes the reduction of ubiquinone-1 to ubiquinol by two successive reactions, coupled with the transport of Na(+) ions from the cytoplasm to the periplasm. NqrA to NqrE are probably involved in the second step, the conversion of ubisemiquinone to ubiquinol. This chain is Na(+)-translocating NADH-quinone reductase subunit B, found in Pseudomonas paraeruginosa (strain DSM 24068 / PA7) (Pseudomonas aeruginosa (strain PA7)).